The following is a 196-amino-acid chain: Molybdenum cofactor guanylyltransferase (196 aa).

GTP contacts are provided by residues 10–12 (LAG), Lys23, Asn51, Asp69, and Asp99. Asp99 lines the Mg(2+) pocket.

It belongs to the MobA family. In terms of assembly, monomer. It depends on Mg(2+) as a cofactor.

It is found in the cytoplasm. It catalyses the reaction Mo-molybdopterin + GTP + H(+) = Mo-molybdopterin guanine dinucleotide + diphosphate. In terms of biological role, transfers a GMP moiety from GTP to Mo-molybdopterin (Mo-MPT) cofactor (Moco or molybdenum cofactor) to form Mo-molybdopterin guanine dinucleotide (Mo-MGD) cofactor. This chain is Molybdenum cofactor guanylyltransferase, found in Shewanella frigidimarina (strain NCIMB 400).